Consider the following 114-residue polypeptide: UPF0339 protein PM0519 (114 aa).

A run of 2 repeats spans residues 11-59 (AKDG…NFEV) and 62-110 (AKND…IKDL).

It belongs to the UPF0339 family. Duplicated subfamily.

The sequence is that of UPF0339 protein PM0519 from Pasteurella multocida (strain Pm70).